The sequence spans 335 residues: MAAGAAEAAVAAVEEVGSAGQFEELLRLKAKSLLVVHFWAPWAPQCAQMNEVMAELAKELPQVSFVKLEAEGVPEVSEKYEISSVPTFLFFKNSQKIDRLDGAHAPELTKKVQRHASSGSFLPSANEHLKEDLNLRLKKLTHAAPCMLFMKGTPQEPRCGFSKQMVEILHKHNIQFSSFDIFSDEEVRQGLKAYSSWPTYPQLYVSGELIGGLDIIKELEASEELDTICPKAPKLEERLKVLTNKASVMLFMKGNKQEAKCGFSKQILEILNSTGVEYETFDILEDEEVRQGLKAYSNWPTYPQLYVKGELVGGLDIVKELKENGELLPILRGEN.

N-acetylalanine is present on alanine 2. In terms of domain architecture, Thioredoxin spans 2–117; it reads AAGAAEAAVA…LTKKVQRHAS (116 aa). Phosphoserine is present on residues serine 117 and serine 120. 2 consecutive Glutaredoxin domains span residues 144–236 and 237–335; these read APCM…PKLE and ERLK…RGEN. Positions 159 and 261 each coordinate [2Fe-2S] cluster.

In terms of assembly, homodimer; the homodimer is independent of 2Fe-2S clusters. Heterotrimer; forms a heterotrimeric complex composed by two BOLA2 molecules and one GLRX3 molecule; linked by [2Fe-2S] clusters. Interacts (via N-terminus) with PRKCQ/PKC-theta. Interacts (via C-terminus) with CSRP3. Interacts with CSRP2. In terms of tissue distribution, expressed in heart, spleen, testis and, to a lower extent, in thymus and peripheral blood leukocytes. Weakly expressed in lung, placenta, colon and small intestine.

The protein resides in the cytoplasm. It localises to the cytosol. The protein localises to the cell cortex. It is found in the myofibril. Its subcellular location is the sarcomere. The protein resides in the z line. In terms of biological role, together with BOLA2, acts as a cytosolic iron-sulfur (Fe-S) cluster assembly factor that facilitates [2Fe-2S] cluster insertion into a subset of cytosolic proteins. Acts as a critical negative regulator of cardiac hypertrophy and a positive inotropic regulator. Required for hemoglobin maturation. Does not possess any thyoredoxin activity since it lacks the conserved motif that is essential for catalytic activity. In Homo sapiens (Human), this protein is Glutaredoxin-3 (GLRX3).